Here is a 262-residue protein sequence, read N- to C-terminus: Histone chaperone cia1 (262 aa).

The disordered stretch occupies residues 157-262; it reads IQWDNPDFDD…KPEEKPETSQ (106 aa). Coiled-coil stretches lie at residues 173-196 and 223-253; these read DADEEEEEEEADEMEEEFDEEGEG and KGSEEEEEEEIDIEEEEEESALANASAAEEK. Acidic residues-rich tracts occupy residues 173 to 219 and 226 to 242; these read DADE…GEGE and EEEEEEEIDIEEEEEES. Positions 250 to 262 are enriched in basic and acidic residues; that stretch reads AEEKPEEKPETSQ.

Belongs to the ASF1 family. Interacts with histone H3 and histone H4.

The protein resides in the nucleus. Functionally, histone chaperone that facilitates histone deposition and histone exchange and removal during nucleosome assembly and disassembly. The protein is Histone chaperone cia1 (cia1) of Schizosaccharomyces pombe (strain 972 / ATCC 24843) (Fission yeast).